The chain runs to 460 residues: uncharacterized protein (460 aa).

A TRAM domain is found at 6 to 64 (PVKKNSTYNLYITGMGTKGEGIGKINNFTIFVTGAILGEEVEVNIIKVNKNYAVGKLLN). 4 residues coordinate [4Fe-4S] cluster: Cys-77, Cys-83, Cys-86, and Cys-163. Gln-287, Tyr-316, Glu-337, and Asp-385 together coordinate S-adenosyl-L-methionine. The Nucleophile role is filled by Cys-412.

Belongs to the class I-like SAM-binding methyltransferase superfamily. RNA M5U methyltransferase family.

This is an uncharacterized protein from Clostridium tetani (strain Massachusetts / E88).